Reading from the N-terminus, the 891-residue chain is Schlafen family member 5 (891 aa).

K59 participates in a covalent cross-link: Glycyl lysine isopeptide (Lys-Gly) (interchain with G-Cter in SUMO2). 578–585 is a binding site for ATP; it reads GLPGSGKT.

This sequence belongs to the Schlafen family. Subgroup III subfamily.

Its function is as follows. May have a role in hematopoietic cell differentiation. The protein is Schlafen family member 5 (SLFN5) of Homo sapiens (Human).